Here is a 340-residue protein sequence, read N- to C-terminus: Flap endonuclease 1 (340 aa).

The segment at 1–98 is N-domain; the sequence is MGVDLGGLVE…ETIKARAEVR (98 aa). 7 residues coordinate Mg(2+): D27, D80, E151, E153, D172, D174, and D235. The segment at 115 to 256 is I-domain; that stretch reads EAYKYAQAST…TALKLVKKHG (142 aa). The interval 332–340 is interaction with PCNA; that stretch reads KQKTLSSWF.

It belongs to the XPG/RAD2 endonuclease family. FEN1 subfamily. Interacts with PCNA. PCNA stimulates the nuclease activity without altering cleavage specificity. It depends on Mg(2+) as a cofactor.

In terms of biological role, structure-specific nuclease with 5'-flap endonuclease and 5'-3' exonuclease activities involved in DNA replication and repair. During DNA replication, cleaves the 5'-overhanging flap structure that is generated by displacement synthesis when DNA polymerase encounters the 5'-end of a downstream Okazaki fragment. Binds the unpaired 3'-DNA end and kinks the DNA to facilitate 5' cleavage specificity. Cleaves one nucleotide into the double-stranded DNA from the junction in flap DNA, leaving a nick for ligation. Also involved in the base excision repair (BER) pathway. Acts as a genome stabilization factor that prevents flaps from equilibrating into structures that lead to duplications and deletions. Also possesses 5'-3' exonuclease activity on nicked or gapped double-stranded DNA. The sequence is that of Flap endonuclease 1 from Methanocella arvoryzae (strain DSM 22066 / NBRC 105507 / MRE50).